The following is a 262-amino-acid chain: Hemin import ATP-binding protein HmuV (262 aa).

The region spanning 3 to 244 is the ABC transporter domain; sequence LQARNLTLAR…DHMRRVYGIE (242 aa). 35–42 contacts ATP; it reads GANGAGKS.

It belongs to the ABC transporter superfamily. Heme (hemin) importer (TC 3.A.1.14.5) family. The complex is composed of two ATP-binding proteins (HmuV), two transmembrane proteins (HmuU) and a solute-binding protein (HmuT).

The protein resides in the cell inner membrane. In terms of biological role, part of the ABC transporter complex HmuTUV involved in hemin import. Responsible for energy coupling to the transport system. The sequence is that of Hemin import ATP-binding protein HmuV from Bordetella pertussis (strain Tohama I / ATCC BAA-589 / NCTC 13251).